We begin with the raw amino-acid sequence, 447 residues long: Zinc finger protein ZIC 1 (447 aa).

The C2H2-type 1; atypical zinc-finger motif lies at 225-260 (LICKWIEPEQLANPKKSCNKTFSTMHELVTHVTVEH). The C2H2-type 2; atypical zinc finger occupies 269–296 (HICFWEECPREGKPFKAKYKLVNHIRVH). C2H2-type zinc fingers lie at residues 302-326 (FPCP…KRTH), 332-356 (FKCE…MHVH), and 362-384 (YLCK…MKVH). The interval 375-434 (SSLRKHMKVHESSSQGSQPSPAASSGYESSTPPTIVSPTTDNPTTSSMSPSSSAVHHTAG) is disordered. Residues 386-427 (SSSQGSQPSPAASSGYESSTPPTIVSPTTDNPTTSSMSPSSS) are compositionally biased toward low complexity.

It belongs to the GLI C2H2-type zinc-finger protein family. In terms of assembly, interacts (via the C2H2-type domains 3, 4 and 5) with MDFIC (via the C2H2-type domains 3, 4 and 5). Interacts with GLI1; the interaction enhances transcription activation. Interacts with GLI2. Interacts with GLI3; the interaction enhances transcription activation. In terms of tissue distribution, expressed in osteoblasts (at protein level). Expressed in the CNS. A high level expression is seen in the cerebellum, while a low level expression is seen in the olfactory bulb, diencephalon, and brainstem. Expressed in lumbar spine and iliac crest.

The protein localises to the nucleus. The protein resides in the cytoplasm. Its function is as follows. Acts as a transcriptional activator. Involved in neurogenesis. Plays important roles in the early stage of organogenesis of the CNS, as well as during dorsal spinal cord development and maturation of the cerebellum. Involved in the spatial distribution of mossy fiber (MF) neurons within the pontine gray nucleus (PGN). Plays a role in the regulation of MF axon pathway choice. Promotes MF migration towards ipsilaterally-located cerebellar territories. May have a role in shear flow mechanotransduction in osteocytes. Retains nuclear GLI1 and GLI3 in the cytoplasm. Binds to the minimal GLI-consensus sequence 5'-TGGGTGGTC-3'. The polypeptide is Zinc finger protein ZIC 1 (Zic1) (Mus musculus (Mouse)).